A 434-amino-acid polypeptide reads, in one-letter code: Glutamyl-tRNA reductase (434 aa).

Residues 49 to 52 (TCNR), S109, 114 to 116 (EPQ), and Q120 contribute to the substrate site. The active-site Nucleophile is C50. Residue 189–194 (GAGEMC) participates in NADP(+) binding.

It belongs to the glutamyl-tRNA reductase family. In terms of assembly, homodimer.

The catalysed reaction is (S)-4-amino-5-oxopentanoate + tRNA(Glu) + NADP(+) = L-glutamyl-tRNA(Glu) + NADPH + H(+). The protein operates within porphyrin-containing compound metabolism; protoporphyrin-IX biosynthesis; 5-aminolevulinate from L-glutamyl-tRNA(Glu): step 1/2. In terms of biological role, catalyzes the NADPH-dependent reduction of glutamyl-tRNA(Glu) to glutamate 1-semialdehyde (GSA). This Geobacter sulfurreducens (strain ATCC 51573 / DSM 12127 / PCA) protein is Glutamyl-tRNA reductase.